We begin with the raw amino-acid sequence, 1342 residues long: DNA-directed RNA polymerase subunit beta (1342 aa).

Belongs to the RNA polymerase beta chain family. In terms of assembly, the RNAP catalytic core consists of 2 alpha, 1 beta, 1 beta' and 1 omega subunit. When a sigma factor is associated with the core the holoenzyme is formed, which can initiate transcription.

The enzyme catalyses RNA(n) + a ribonucleoside 5'-triphosphate = RNA(n+1) + diphosphate. Functionally, DNA-dependent RNA polymerase catalyzes the transcription of DNA into RNA using the four ribonucleoside triphosphates as substrates. This Histophilus somni (strain 129Pt) (Haemophilus somnus) protein is DNA-directed RNA polymerase subunit beta.